The chain runs to 297 residues: Mitochondrial ornithine transporter 1 (297 aa).

Solcar repeat units follow at residues 15-97 (GSPA…LKLT), 102-205 (DPTL…FKKN), and 212-292 (KPHF…FRET). A run of 6 helical transmembrane segments spans residues 18–38 (ASTFSAALVSSAISNVIGYPL), 72–91 (GLTLPLISATLSRSVSFTVY), 107–127 (YFISGLGTGTFISLFACPFEY), 184–204 (HLTRDALGSACYFTIYETFKK), 215–235 (FAYAFSGAFCGALSWILVFPV), and 264–285 (IYRGIGISLMRSALINSCNFTL).

This sequence belongs to the mitochondrial carrier (TC 2.A.29) family.

It is found in the mitochondrion inner membrane. In terms of biological role, required for arginine biosynthesis. Transports ornithine synthesized from glutamate in the mitochondrial matrix to the cytosol, where it is converted to arginine. The sequence is that of Mitochondrial ornithine transporter 1 from Schizosaccharomyces pombe (strain 972 / ATCC 24843) (Fission yeast).